Consider the following 116-residue polypeptide: Large ribosomal subunit protein bL17 (116 aa).

The protein belongs to the bacterial ribosomal protein bL17 family. As to quaternary structure, part of the 50S ribosomal subunit. Contacts protein L32.

In Gloeothece citriformis (strain PCC 7424) (Cyanothece sp. (strain PCC 7424)), this protein is Large ribosomal subunit protein bL17.